The primary structure comprises 132 residues: Ribosome-binding factor A (132 aa).

The protein belongs to the RbfA family. Monomer. Binds 30S ribosomal subunits, but not 50S ribosomal subunits or 70S ribosomes.

The protein resides in the cytoplasm. Its function is as follows. One of several proteins that assist in the late maturation steps of the functional core of the 30S ribosomal subunit. Associates with free 30S ribosomal subunits (but not with 30S subunits that are part of 70S ribosomes or polysomes). Required for efficient processing of 16S rRNA. May interact with the 5'-terminal helix region of 16S rRNA. The chain is Ribosome-binding factor A from Rhizorhabdus wittichii (strain DSM 6014 / CCUG 31198 / JCM 15750 / NBRC 105917 / EY 4224 / RW1) (Sphingomonas wittichii).